Here is a 208-residue protein sequence, read N- to C-terminus: Protein-L-isoaspartate O-methyltransferase (208 aa).

Ser-59 is a catalytic residue.

It belongs to the methyltransferase superfamily. L-isoaspartyl/D-aspartyl protein methyltransferase family.

The protein localises to the cytoplasm. It catalyses the reaction [protein]-L-isoaspartate + S-adenosyl-L-methionine = [protein]-L-isoaspartate alpha-methyl ester + S-adenosyl-L-homocysteine. In terms of biological role, catalyzes the methyl esterification of L-isoaspartyl residues in peptides and proteins that result from spontaneous decomposition of normal L-aspartyl and L-asparaginyl residues. It plays a role in the repair and/or degradation of damaged proteins. This Vibrio vulnificus (strain CMCP6) protein is Protein-L-isoaspartate O-methyltransferase.